Consider the following 184-residue polypeptide: Mediator of RNA polymerase II transcription subunit 30 (184 aa).

Positions 136 to 179 (SQLRFASEEKREILEVNKKLKQKNQQLKQIMDQLRNLIWDINSM) form a coiled coil.

This sequence belongs to the Mediator complex subunit 30 family. Component of the Mediator complex.

It is found in the nucleus. Component of the Mediator complex, a coactivator involved in the regulated transcription of nearly all RNA polymerase II-dependent genes. Mediator functions as a bridge to convey information from gene-specific regulatory proteins to the basal RNA polymerase II transcription machinery. Mediator is recruited to promoters by direct interactions with regulatory proteins and serves as a scaffold for the assembly of a functional preinitiation complex with RNA polymerase II and the general transcription factors. The chain is Mediator of RNA polymerase II transcription subunit 30 (med30) from Xenopus laevis (African clawed frog).